We begin with the raw amino-acid sequence, 907 residues long: Interference hedgehog (907 aa).

The first 23 residues, Met-1–Ala-23, serve as a signal peptide directing secretion. Over Ala-24–Pro-709 the chain is Extracellular. Ig-like C2-type domains lie at Pro-42–Ser-149, Gly-152–Ala-233, Pro-252–Leu-340, and Pro-346–Asn-433. 3 cysteine pairs are disulfide-bonded: Cys-65–Cys-127, Cys-173–Cys-221, and Cys-276–Cys-324. N-linked (GlcNAc...) asparagine glycosylation is found at Asn-101, Asn-203, Asn-300, and Asn-355. Cysteines 367 and 415 form a disulfide. A disordered region spans residues Gly-427–Val-474. Over residues Gln-462–Val-474 the composition is skewed to polar residues. 2 Fibronectin type-III domains span residues Pro-468–Gly-578 and Val-586–Pro-681. N-linked (GlcNAc...) asparagine glycosylation occurs at Asn-473. Heparin contacts are provided by Arg-504, Lys-511, and Lys-513. N-linked (GlcNAc...) asparagine glycans are attached at residues Asn-537 and Asn-548. Arg-552 contacts heparin. A glycan (N-linked (GlcNAc...) asparagine) is linked at Asn-568. Over residues Gly-676–Gln-688 the composition is skewed to polar residues. Residues Gly-676 to His-701 form a disordered region. Residue Asn-702 is glycosylated (N-linked (GlcNAc...) asparagine). The helical transmembrane segment at Met-710–Leu-730 threads the bilayer. The Cytoplasmic segment spans residues Cys-731–Val-907. Disordered stretches follow at residues Ala-780–Asp-805 and Met-829–Gly-881. Composition is skewed to low complexity over residues Gln-781 to Gln-794 and Asn-853 to Gly-863. The span at Leu-865 to Asn-878 shows a compositional bias: polar residues.

This sequence belongs to the immunoglobulin superfamily. IHOG family. In terms of assembly, homodimer. Heterotetramer; 2 iHog chains bind 2 hh chains when facilitated by heparin, heparin is required to promote high-affinity interactions between hh and iHog.

It localises to the membrane. Functionally, mediates response to the active Hedgehog (Hh) protein signal in embryos, functioning upstream or at the level of patched (ptc). The chain is Interference hedgehog from Drosophila virilis (Fruit fly).